A 93-amino-acid chain; its full sequence is uncharacterized protein (93 aa).

It to E.coli YdbD C-terminal region.

This is an uncharacterized protein from Escherichia coli (strain K12).